We begin with the raw amino-acid sequence, 50 residues long: MANKKKVALACSECGSRNYTITENPNRTERLEVQKFCKYCGKHTLHRETK.

The protein belongs to the bacterial ribosomal protein bL33 family.

The sequence is that of Large ribosomal subunit protein bL33B from Ligilactobacillus salivarius (strain UCC118) (Lactobacillus salivarius).